Consider the following 1276-residue polypeptide: cGMP-specific 3',5'-cyclic phosphodiesterase (1276 aa).

Disordered regions lie at residues 1–76 (MHEL…TAAG), 91–185 (NQVK…QQDV), and 241–260 (ASPT…SASS). Composition is skewed to low complexity over residues 12–47 (SSSS…SSAS) and 57–76 (TSTA…TAAG). Over residues 109–124 (APYPPVPAAKPKPTPT) the composition is skewed to pro residues. Residues 129-140 (SKFKSTSREVDV) are compositionally biased toward basic and acidic residues. The span at 147–166 (ARSSTISPGVSIHTQTIQQE) shows a compositional bias: polar residues. 2 stretches are compositionally biased toward low complexity: residues 167–180 (SSSA…SSSS) and 249–260 (SPRSLSNSSASS). GAF domains lie at 290–442 (DIDV…GIGI) and 474–658 (NLEC…GLGI). One can recognise a PDEase domain in the interval 688 to 1119 (SQDQTEKLTQ…RNWQDLAEKV (432 aa)). Residue His764 is the Proton donor of the active site. A divalent metal cation is bound by residues His768, His804, Asp805, and Asp1023. Disordered regions lie at residues 1162 to 1193 (AQHG…TGAL) and 1205 to 1276 (LYNS…CSLL). Basic and acidic residues-rich tracts occupy residues 1171–1180 (DDSHTPEHQR) and 1221–1233 (LESH…DDKS). Positions 1248-1263 (GRMSASSSTSSAGTVV) are enriched in low complexity. Over residues 1266-1276 (SKKRSKLCSLL) the composition is skewed to basic residues. Residue Cys1273 is modified to Cysteine methyl ester. A lipid anchor (S-farnesyl cysteine) is attached at Cys1273. Residues 1274–1276 (SLL) constitute a propeptide, removed in mature form.

It belongs to the cyclic nucleotide phosphodiesterase family. Interacts with PrBP. Requires a divalent metal cation as cofactor.

It is found in the cell membrane. It catalyses the reaction 3',5'-cyclic GMP + H2O = GMP + H(+). Functionally, has a role regulating cGMP transport in Malpighian tubule principal cells. The chain is cGMP-specific 3',5'-cyclic phosphodiesterase from Drosophila persimilis (Fruit fly).